We begin with the raw amino-acid sequence, 174 residues long: NADH-quinone oxidoreductase subunit B 1 (174 aa).

[4Fe-4S] cluster is bound by residues C53, C54, C118, and C148.

This sequence belongs to the complex I 20 kDa subunit family. In terms of assembly, NDH-1 is composed of 14 different subunits. Subunits NuoB, C, D, E, F, and G constitute the peripheral sector of the complex. It depends on [4Fe-4S] cluster as a cofactor.

It is found in the cell inner membrane. It catalyses the reaction a quinone + NADH + 5 H(+)(in) = a quinol + NAD(+) + 4 H(+)(out). NDH-1 shuttles electrons from NADH, via FMN and iron-sulfur (Fe-S) centers, to quinones in the respiratory chain. The immediate electron acceptor for the enzyme in this species is believed to be ubiquinone. Couples the redox reaction to proton translocation (for every two electrons transferred, four hydrogen ions are translocated across the cytoplasmic membrane), and thus conserves the redox energy in a proton gradient. In Cereibacter sphaeroides (strain KD131 / KCTC 12085) (Rhodobacter sphaeroides), this protein is NADH-quinone oxidoreductase subunit B 1.